The following is a 463-amino-acid chain: Dialkyldecalin synthase (463 aa).

Residues Val-13, 32 to 33, Ile-121, and Asp-275 contribute to the FAD site; that span reads ER.

The protein belongs to the PheA/TfdB FAD monooxygenase family. As to quaternary structure, homodimer. FAD is required as a cofactor.

It carries out the reaction 4-[(2E,7S,8E,10E,13R,14R,16E,18E)-14-ethyl-7,13-dihydroxy-2,16,18-trimethylicosa-2,8,10,16,18-pentaenoyl]-2-methylidene-5-oxo-2,5-dihydro-1H-pyrrol-3-olate = 4-[(1R,2R,4aS,5S,8aR)-2-[(2R,3R,5E,7E)-3-ethyl-2-hydroxy-5,7-dimethylnona-5,7-dien-1-yl]-5-hydroxy-1-methyl-1,2,4a,5,6,7,8,8a-octahydronaphthalene-1-carbonyl]-2-methylidene-5-oxo-2,5-dihydro-1H-pyrrol-3-olate. Its pathway is antibiotic biosynthesis. Involved in the biosynthesis of the spirotetramate antibiotics pyrroindomycins. Catalyzes the intramolecular cyclization forming the dialkyldecalin moiety in pyrroindomycins, via an endo-selective [4+2] cycloaddition reaction. The sequence is that of Dialkyldecalin synthase from Streptomyces rugosporus.